Here is a 415-residue protein sequence, read N- to C-terminus: Putative glutamate--cysteine ligase 2 (415 aa).

This sequence belongs to the glutamate--cysteine ligase type 2 family. YbdK subfamily.

The catalysed reaction is L-cysteine + L-glutamate + ATP = gamma-L-glutamyl-L-cysteine + ADP + phosphate + H(+). Its function is as follows. ATP-dependent carboxylate-amine ligase which exhibits weak glutamate--cysteine ligase activity. The sequence is that of Putative glutamate--cysteine ligase 2 from Bordetella petrii (strain ATCC BAA-461 / DSM 12804 / CCUG 43448).